A 543-amino-acid polypeptide reads, in one-letter code: Probable malate:quinone oxidoreductase (543 aa).

This sequence belongs to the MQO family. FAD is required as a cofactor.

It catalyses the reaction (S)-malate + a quinone = a quinol + oxaloacetate. The protein operates within carbohydrate metabolism; tricarboxylic acid cycle; oxaloacetate from (S)-malate (quinone route): step 1/1. The chain is Probable malate:quinone oxidoreductase from Acinetobacter baylyi (strain ATCC 33305 / BD413 / ADP1).